The sequence spans 199 residues: Peptidyl-tRNA hydrolase (199 aa).

TRNA is bound at residue tyrosine 15. Residue histidine 20 is the Proton acceptor of the active site. TRNA contacts are provided by tyrosine 66, asparagine 68, and asparagine 114.

The protein belongs to the PTH family. Monomer.

It is found in the cytoplasm. It catalyses the reaction an N-acyl-L-alpha-aminoacyl-tRNA + H2O = an N-acyl-L-amino acid + a tRNA + H(+). In terms of biological role, hydrolyzes ribosome-free peptidyl-tRNAs (with 1 or more amino acids incorporated), which drop off the ribosome during protein synthesis, or as a result of ribosome stalling. Functionally, catalyzes the release of premature peptidyl moieties from peptidyl-tRNA molecules trapped in stalled 50S ribosomal subunits, and thus maintains levels of free tRNAs and 50S ribosomes. The chain is Peptidyl-tRNA hydrolase from Burkholderia ambifaria (strain MC40-6).